The chain runs to 849 residues: Period circadian protein (849 aa).

Polar residues predominate over residues Met-1–Val-13. The tract at residues Met-1–Leu-79 is disordered. 2 stretches are compositionally biased toward low complexity: residues Ser-14 to Ser-27 and Ser-35 to Ser-58. The short motif at Asp-63–Lys-74 is the Nuclear localization signal element. 2 consecutive PAS domains span residues Asn-166–Pro-296 and Phe-314–Glu-416. A disordered region spans residues Asn-680–Ser-746. The span at Asn-706–Gln-720 shows a compositional bias: basic residues. A compositionally biased stretch (low complexity) spans Asn-735 to Ser-746.

In terms of assembly, forms a heterodimer with timeless (TIM); the complex then translocates into the nucleus. Phosphorylated with a circadian rhythmicity.

The protein resides in the nucleus. Functionally, involved in the generation of biological rhythms. The biological cycle depends on the rhythmic formation and nuclear localization of the tim-per complex. Light induces the degradation of tim, which promotes elimination of per. Nuclear activity of the heterodimer coordinatively regulates per and tim transcription negative feedback loop. Behaves as a negative element in circadian transcriptional loop. Does not appear to bind DNA, suggesting indirect transcriptional inhibition. Expression exhibits prominent circadian variation in adult heads and in particular in the photoreceptor nuclei. The protein is Period circadian protein (per) of Antheraea pernyi (Chinese oak silk moth).